The following is a 369-amino-acid chain: Aminomethyltransferase (369 aa).

Belongs to the GcvT family. The glycine cleavage system is composed of four proteins: P, T, L and H.

It catalyses the reaction N(6)-[(R)-S(8)-aminomethyldihydrolipoyl]-L-lysyl-[protein] + (6S)-5,6,7,8-tetrahydrofolate = N(6)-[(R)-dihydrolipoyl]-L-lysyl-[protein] + (6R)-5,10-methylene-5,6,7,8-tetrahydrofolate + NH4(+). The glycine cleavage system catalyzes the degradation of glycine. The chain is Aminomethyltransferase from Alkaliphilus metalliredigens (strain QYMF).